The sequence spans 304 residues: Pseudouridine-5'-phosphate glycosidase (304 aa).

The Proton donor role is filled by glutamate 25. Substrate-binding residues include lysine 86 and valine 106. Position 138 (aspartate 138) interacts with Mn(2+). 140–142 (SAD) provides a ligand contact to substrate. The active-site Nucleophile is the lysine 159.

The protein belongs to the pseudouridine-5'-phosphate glycosidase family. In terms of assembly, homotrimer. It depends on Mn(2+) as a cofactor.

The catalysed reaction is D-ribose 5-phosphate + uracil = psi-UMP + H2O. Its function is as follows. Catalyzes the reversible cleavage of pseudouridine 5'-phosphate (PsiMP) to ribose 5-phosphate and uracil. Functions biologically in the cleavage direction, as part of a pseudouridine degradation pathway. The protein is Pseudouridine-5'-phosphate glycosidase of Lysinibacillus sphaericus (strain C3-41).